Consider the following 639-residue polypeptide: DNA gyrase subunit B (639 aa).

A compositionally biased stretch (basic and acidic residues) spans 392 to 402; the sequence is QAEELTRRKSA. The interval 392-417 is disordered; it reads QAEELTRRKSALESTSLPGKLADCQS. The region spanning 423–537 is the Toprim domain; sequence SELFIVEGDS…AGYVYAAQPP (115 aa). The Mg(2+) site is built by Glu429, Asp502, and Asp504.

The protein belongs to the type II topoisomerase GyrB family. As to quaternary structure, heterotetramer, composed of two GyrA and two GyrB chains. In the heterotetramer, GyrA contains the active site tyrosine that forms a transient covalent intermediate with DNA, while GyrB binds cofactors and catalyzes ATP hydrolysis. Requires Mg(2+) as cofactor. The cofactor is Mn(2+). It depends on Ca(2+) as a cofactor.

The protein resides in the cytoplasm. It catalyses the reaction ATP-dependent breakage, passage and rejoining of double-stranded DNA.. A type II topoisomerase that negatively supercoils closed circular double-stranded (ds) DNA in an ATP-dependent manner to modulate DNA topology and maintain chromosomes in an underwound state. Negative supercoiling favors strand separation, and DNA replication, transcription, recombination and repair, all of which involve strand separation. Also able to catalyze the interconversion of other topological isomers of dsDNA rings, including catenanes and knotted rings. Type II topoisomerases break and join 2 DNA strands simultaneously in an ATP-dependent manner. This Haloferax lucentense (strain DSM 14919 / JCM 9276 / NCIMB 13854 / Aa 2.2) (Haloferax alicantei) protein is DNA gyrase subunit B.